The chain runs to 233 residues: Clathrin light chain (233 aa).

The tract at residues 1–124 (MSEKFPPLED…EDRSEVVDQW (124 aa)) is disordered. Positions 17-43 (PNDKKDDDTDFLKREAEILGDEFKTEQ) are enriched in basic and acidic residues. T49 is modified (phosphothreonine). Position 52 is a phosphoserine (S52). Residues 56 to 67 (DDDEIRDFEEQF) are compositionally biased toward acidic residues. Over residues 69–92 (DINSANGAVSSDQNGSATVSSGND) the composition is skewed to polar residues. Residues 112–124 (SVKEDRSEVVDQW) are compositionally biased toward basic and acidic residues. Residues 125–186 (KQRRAVEIHE…EAFLKKRDEF (62 aa)) are a coiled coil. Residues 144 to 204 (KELQDEAIKH…DRALQLINQD (61 aa)) form an involved in binding clathrin heavy chain region.

Belongs to the clathrin light chain family. As to quaternary structure, clathrin coats are formed from molecules containing 3 heavy chains and 3 light chains. Interacts with the auxilin-like clathrin uncoating factor SWA2.

The protein resides in the cytoplasmic vesicle membrane. The protein localises to the membrane. It is found in the coated pit. Functionally, clathrin is the major protein of the polyhedral coat of coated pits and vesicles. In yeast, it is involved in the retention of proteins in an intracellular membrane compartment, presumably the trans-Golgi. The yeast light chain is important for cell growth. The light chain may help to properly orient the assembly/ disassembly of the clathrin coats. The chain is Clathrin light chain (CLC1) from Saccharomyces cerevisiae (strain ATCC 204508 / S288c) (Baker's yeast).